Here is a 403-residue protein sequence, read N- to C-terminus: ATP phosphoribosyltransferase regulatory subunit (403 aa).

This sequence belongs to the class-II aminoacyl-tRNA synthetase family. HisZ subfamily. Heteromultimer composed of HisG and HisZ subunits.

The protein resides in the cytoplasm. It functions in the pathway amino-acid biosynthesis; L-histidine biosynthesis; L-histidine from 5-phospho-alpha-D-ribose 1-diphosphate: step 1/9. In terms of biological role, required for the first step of histidine biosynthesis. May allow the feedback regulation of ATP phosphoribosyltransferase activity by histidine. In Crocosphaera subtropica (strain ATCC 51142 / BH68) (Cyanothece sp. (strain ATCC 51142)), this protein is ATP phosphoribosyltransferase regulatory subunit.